Here is a 230-residue protein sequence, read N- to C-terminus: UPF0688 protein C1orf174 homolog (230 aa).

Disordered stretches follow at residues 1–85 (MRSR…SLPK) and 97–166 (AEDS…VRAS). Positions 11–30 (RSSARLRARSYSSASLASAR) are enriched in low complexity. Residues 31–48 (DVTSSTSAKTTCLASSSH) are compositionally biased toward polar residues. The span at 49–78 (KATDRRTSKKFKYDKGHLVKAELQKLDPKS) shows a compositional bias: basic and acidic residues. S180 is modified (phosphoserine).

The protein belongs to the UPF0688 family.

It localises to the nucleus. This is UPF0688 protein C1orf174 homolog from Mus musculus (Mouse).